Here is a 243-residue protein sequence, read N- to C-terminus: Phosphoribosyl isomerase A (243 aa).

The active-site Proton acceptor is the Asp10. The active-site Proton donor is Asp129.

Belongs to the HisA/HisF family.

Its subcellular location is the cytoplasm. The catalysed reaction is 1-(5-phospho-beta-D-ribosyl)-5-[(5-phospho-beta-D-ribosylamino)methylideneamino]imidazole-4-carboxamide = 5-[(5-phospho-1-deoxy-D-ribulos-1-ylimino)methylamino]-1-(5-phospho-beta-D-ribosyl)imidazole-4-carboxamide. It catalyses the reaction N-(5-phospho-beta-D-ribosyl)anthranilate = 1-(2-carboxyphenylamino)-1-deoxy-D-ribulose 5-phosphate. It participates in amino-acid biosynthesis; L-histidine biosynthesis; L-histidine from 5-phospho-alpha-D-ribose 1-diphosphate: step 4/9. The protein operates within amino-acid biosynthesis; L-tryptophan biosynthesis; L-tryptophan from chorismate: step 3/5. Its function is as follows. Involved in both the histidine and tryptophan biosynthetic pathways. The protein is Phosphoribosyl isomerase A of Mycobacteroides abscessus (strain ATCC 19977 / DSM 44196 / CCUG 20993 / CIP 104536 / JCM 13569 / NCTC 13031 / TMC 1543 / L948) (Mycobacterium abscessus).